The primary structure comprises 256 residues: Kallikrein-15 (256 aa).

An N-terminal signal peptide occupies residues 1–16 (MWLLLTLSFLLASTAA). The propeptide at 17–21 (QDGDK) is activation peptide. The region spanning 22-254 (LLEGDECAPH…YLEWIRETMK (233 aa)) is the Peptidase S1 domain. A disulfide bridge links Cys47 with Cys63. Residues His62 and Asp106 each act as charge relay system in the active site. 3 disulfides stabilise this stretch: Cys138–Cys215, Cys180–Cys194, and Cys205–Cys230. N-linked (GlcNAc...) asparagine glycosylation is present at Asn171. The active-site Charge relay system is Ser209. Asn232 carries N-linked (GlcNAc...) asparagine glycosylation.

It belongs to the peptidase S1 family. Kallikrein subfamily. As to expression, highest expression in the thyroid gland. Also expressed in the prostate, salivary, and adrenal glands and in the colon testis and kidney.

The protein resides in the secreted. Functionally, protease whose physiological substrate is not yet known. The polypeptide is Kallikrein-15 (KLK15) (Homo sapiens (Human)).